Consider the following 171-residue polypeptide: MAEKRNIFLVGPMGAGKSTIGRHLAQMLHLEFHDSDQEIENRTGADIAWVFDVEGEEGFRRRETQVVADLTEKQGIVLATGGGSIQSKDIRNNLSARGIVVYLETTIDKQVARTQRDKRRPLLQVEDPREVLEKLAEIRNPLYEEIADVIVKTDEQSAKVVANQIIDQLGF.

Residue 14 to 19 (GAGKST) participates in ATP binding. Position 18 (Ser-18) interacts with Mg(2+). 3 residues coordinate substrate: Asp-36, Arg-60, and Gly-82. Arg-120 is a binding site for ATP. Arg-139 is a binding site for substrate. Gln-156 is a binding site for ATP.

The protein belongs to the shikimate kinase family. In terms of assembly, monomer. It depends on Mg(2+) as a cofactor.

The protein localises to the cytoplasm. The catalysed reaction is shikimate + ATP = 3-phosphoshikimate + ADP + H(+). It participates in metabolic intermediate biosynthesis; chorismate biosynthesis; chorismate from D-erythrose 4-phosphate and phosphoenolpyruvate: step 5/7. In terms of biological role, catalyzes the specific phosphorylation of the 3-hydroxyl group of shikimic acid using ATP as a cosubstrate. The polypeptide is Shikimate kinase (Shewanella loihica (strain ATCC BAA-1088 / PV-4)).